The primary structure comprises 338 residues: Phenylalanine--tRNA ligase alpha subunit (338 aa).

Glu-259 provides a ligand contact to Mg(2+).

The protein belongs to the class-II aminoacyl-tRNA synthetase family. Phe-tRNA synthetase alpha subunit type 1 subfamily. Tetramer of two alpha and two beta subunits. Mg(2+) is required as a cofactor.

The protein localises to the cytoplasm. It catalyses the reaction tRNA(Phe) + L-phenylalanine + ATP = L-phenylalanyl-tRNA(Phe) + AMP + diphosphate + H(+). The sequence is that of Phenylalanine--tRNA ligase alpha subunit from Janthinobacterium sp. (strain Marseille) (Minibacterium massiliensis).